The chain runs to 279 residues: DegV domain-containing protein lmo1863 (279 aa).

One can recognise a DegV domain in the interval 4 to 278 (IKIITDSTAG…TGAFAFMYYT (275 aa)). Positions 62 and 94 each coordinate hexadecanoate.

Functionally, may bind long-chain fatty acids, such as palmitate, and may play a role in lipid transport or fatty acid metabolism. This chain is DegV domain-containing protein lmo1863, found in Listeria monocytogenes serovar 1/2a (strain ATCC BAA-679 / EGD-e).